Reading from the N-terminus, the 342-residue chain is Cellular tumor antigen p53 (342 aa).

The transcription activation (acidic) stretch occupies residues 1 to 35 (MEEADLTLPLSQDTFHDLWNNVFLSTENESLPPPE). Residues 68–255 (NYAGEHGFNL…KTEEGNLEKS (188 aa)) mediate DNA binding. Residues cysteine 142, histidine 145, cysteine 201, and cysteine 205 each contribute to the Zn(2+) site. The interval 236 to 243 (RVCACPGR) is interaction with DNA. A compositionally biased stretch (basic and acidic residues) spans 244–256 (DRKTEEGNLEKSG). A disordered region spans residues 244-287 (DRKTEEGNLEKSGTKQTKKRKSAPAPDTSTAKKSKSASSGEDED). The Bipartite nuclear localization signal motif lies at 261 to 278 (KKRKSAPAPDTSTAKKSK). Residues 271-282 (TSTAKKSKSASS) show a composition bias toward low complexity. The interval 288-317 (KEIYTLSIRGRNRYLWFKSLNDGLELMDKT) is oligomerization. Residues 302 to 313 (LWFKSLNDGLEL) carry the Nuclear export signal motif. The segment at 318–342 (GPKIKQEIPAPSSGKRLLKGGSDSD) is disordered. Positions 319–336 (PKIKQEIPAPSSGKRLLK) are basic (repression of DNA-binding).

Belongs to the p53 family. Binds DNA as a homotetramer. Zn(2+) serves as cofactor.

The protein resides in the cytoplasm. It localises to the nucleus. Multifunctional transcription factor that induces cell cycle arrest, DNA repair or apoptosis upon binding to its target DNA sequence. Acts as a tumor suppressor in many tumor types; induces growth arrest or apoptosis depending on the physiological circumstances and cell type. Negatively regulates cell division by controlling expression of a set of genes required for this process. One of the activated genes is an inhibitor of cyclin-dependent kinases. Apoptosis induction seems to be mediated either by stimulation of BAX and FAS antigen expression, or by repression of Bcl-2 expression. The chain is Cellular tumor antigen p53 (tp53) from Xiphophorus maculatus (Southern platyfish).